Here is a 256-residue protein sequence, read N- to C-terminus: Imidazole glycerol phosphate synthase subunit HisF (256 aa).

Active-site residues include aspartate 12 and aspartate 131.

Belongs to the HisA/HisF family. As to quaternary structure, heterodimer of HisH and HisF.

It is found in the cytoplasm. The catalysed reaction is 5-[(5-phospho-1-deoxy-D-ribulos-1-ylimino)methylamino]-1-(5-phospho-beta-D-ribosyl)imidazole-4-carboxamide + L-glutamine = D-erythro-1-(imidazol-4-yl)glycerol 3-phosphate + 5-amino-1-(5-phospho-beta-D-ribosyl)imidazole-4-carboxamide + L-glutamate + H(+). It participates in amino-acid biosynthesis; L-histidine biosynthesis; L-histidine from 5-phospho-alpha-D-ribose 1-diphosphate: step 5/9. Its function is as follows. IGPS catalyzes the conversion of PRFAR and glutamine to IGP, AICAR and glutamate. The HisF subunit catalyzes the cyclization activity that produces IGP and AICAR from PRFAR using the ammonia provided by the HisH subunit. This Micrococcus luteus (strain ATCC 4698 / DSM 20030 / JCM 1464 / CCM 169 / CCUG 5858 / IAM 1056 / NBRC 3333 / NCIMB 9278 / NCTC 2665 / VKM Ac-2230) (Micrococcus lysodeikticus) protein is Imidazole glycerol phosphate synthase subunit HisF.